We begin with the raw amino-acid sequence, 57 residues long: MAVPKRRMSRANTRSRRAQWKAEATGLVSVTVAGQPRKVPRRLLKAARLGLVDLDRR.

It belongs to the bacterial ribosomal protein bL32 family.

In Mycolicibacterium gilvum (strain PYR-GCK) (Mycobacterium gilvum (strain PYR-GCK)), this protein is Large ribosomal subunit protein bL32.